The following is a 555-amino-acid chain: Vacuolar fusion protein MON1 homolog A (555 aa).

Positions 1–12 are enriched in basic and acidic residues; it reads MAADMQRKRSSE. Residues 1 to 87 form a disordered region; sequence MAADMQRKRS…RGPPPLPADM (87 aa). Phosphoserine occurs at positions 31 and 56. The residue at position 61 (T61) is a Phosphothreonine. At S91 the chain carries Phosphoserine. A disordered region spans residues 114–147; sequence PGSSEDWLDPPGAVGRPATEPPREGTAEGDEEDA.

It belongs to the MON1/SAND family. Interacts with CCZ1. Found in a complex with RMC1, CCZ1, MON1A and MON1B. The MON1A-CCZ1B complex interacts with RIMOC1. The MON1A-CCZ1B complex interacts with RAB7A and this interaction is enhanced in the presence of RIMOC1.

In terms of biological role, plays an important role in membrane trafficking through the secretory apparatus. Not involved in endocytic trafficking to lysosomes. Acts in concert with CCZ1, as a guanine exchange factor (GEF) for RAB7, promotes the exchange of GDP to GTP, converting it from an inactive GDP-bound form into an active GTP-bound form. The sequence is that of Vacuolar fusion protein MON1 homolog A (MON1A) from Macaca fascicularis (Crab-eating macaque).